The primary structure comprises 59 residues: Photosystem II reaction center protein K (59 aa).

Residues 1 to 22 (MLNIFSLIGLNSALYSSSCFFA) constitute a propeptide that is removed on maturation. Residues 30-50 (FLSPIVDFMPVIPLLFFLLAF) form a helical membrane-spanning segment.

It belongs to the PsbK family. PSII is composed of 1 copy each of membrane proteins PsbA, PsbB, PsbC, PsbD, PsbE, PsbF, PsbH, PsbI, PsbJ, PsbK, PsbL, PsbM, PsbT, PsbX, PsbY, PsbZ, Psb30/Ycf12, at least 3 peripheral proteins of the oxygen-evolving complex and a large number of cofactors. It forms dimeric complexes.

It is found in the plastid. The protein localises to the chloroplast thylakoid membrane. In terms of biological role, one of the components of the core complex of photosystem II (PSII). PSII is a light-driven water:plastoquinone oxidoreductase that uses light energy to abstract electrons from H(2)O, generating O(2) and a proton gradient subsequently used for ATP formation. It consists of a core antenna complex that captures photons, and an electron transfer chain that converts photonic excitation into a charge separation. The protein is Photosystem II reaction center protein K of Silene latifolia (White campion).